The chain runs to 310 residues: Homoserine kinase (310 aa).

An ATP-binding site is contributed by 91–101; it reads PIGSGLGSSAC.

Belongs to the GHMP kinase family. Homoserine kinase subfamily.

Its subcellular location is the cytoplasm. It carries out the reaction L-homoserine + ATP = O-phospho-L-homoserine + ADP + H(+). It participates in amino-acid biosynthesis; L-threonine biosynthesis; L-threonine from L-aspartate: step 4/5. Functionally, catalyzes the ATP-dependent phosphorylation of L-homoserine to L-homoserine phosphate. This is Homoserine kinase from Sodalis glossinidius (strain morsitans).